The chain runs to 173 residues: Thaumatin-like protein PWIR2 (173 aa).

The signal sequence occupies residues 1–20; the sequence is MATSPVLFLLLAVFAAGASA.

The protein belongs to the thaumatin family.

This is Thaumatin-like protein PWIR2 from Triticum aestivum (Wheat).